A 40-amino-acid polypeptide reads, in one-letter code: Natriuretic peptide TNPd (40 aa).

The cysteines at positions 9 and 25 are disulfide-linked.

Belongs to the natriuretic peptide family. As to expression, expressed by the venom gland.

The protein localises to the secreted. Functionally, snake venom natriuretic peptide that exhibits vasoactive and hypotensive activity. Stimulates cGMP production through the natriuretic peptide receptor 1 (NPR1) with very high potencies for the rat NPR1 (EC(50)=18 nM), and very weak potencies over human NPR1 (30% activation at 10 uM). The chain is Natriuretic peptide TNPd from Oxyuranus microlepidotus (Inland taipan).